A 187-amino-acid polypeptide reads, in one-letter code: Elongation factor P (187 aa).

It belongs to the elongation factor P family.

It localises to the cytoplasm. It functions in the pathway protein biosynthesis; polypeptide chain elongation. Its function is as follows. Involved in peptide bond synthesis. Stimulates efficient translation and peptide-bond synthesis on native or reconstituted 70S ribosomes in vitro. Probably functions indirectly by altering the affinity of the ribosome for aminoacyl-tRNA, thus increasing their reactivity as acceptors for peptidyl transferase. The polypeptide is Elongation factor P (Mycoplasmopsis agalactiae (strain NCTC 10123 / CIP 59.7 / PG2) (Mycoplasma agalactiae)).